We begin with the raw amino-acid sequence, 508 residues long: MADNPVLEQLLRRLEVADGGLDSAELATQLGVEHQAVVGAVKSLQALGEVIEAELRSTKCWELTTEGEEIAREGSHEARVFRSIPLEGLVQSELMQLPSGKVGFSKAMSNKWIRVDKSAADGPRVFRVVDSIEDEVQRRLQQVQAGQAEKLAEKERNELRKRKLLTEVILKTYWVSKGKGFSTSVSKQEAELSPEMISSGSWRDRPFKPYNFSARGVLPDSGHLHPLLKVRSQFRQIFLEMGFTEMPTDNFIESSFWNFDALFQPQQHPARDQHDTFFLRDPAEALQLPMDYVQRVKRTHSQGGYGSQGYKYTWKLEEARKNLLRTHTTAASARALYRLAQKKPFTPAKYFSIDRVFRNETLDATHLAEFHQIEGVIADHGLTLGHLMGVLREFFTKLGITQLRFKPAYNPYTEPSMEVFSYHQGLKKWVEVGNSGVFRPEMLLPMGLPENVSVIAWGLSLERPTMIKYGINNIRELVGHKVNLQMVYDSPVCRLDIEPRSSKTQEAA.

Alanine 2 bears the N-acetylalanine mark. Serine 193 and serine 301 each carry phosphoserine. An N6-acetyllysine modification is found at lysine 311. L-phenylalanine contacts are provided by residues threonine 329, 372-374, and tyrosine 412; that span reads QIE. Glutamate 414 is a binding site for Mg(2+). Phenylalanine 438 contributes to the L-phenylalanine binding site.

This sequence belongs to the class-II aminoacyl-tRNA synthetase family. Phe-tRNA synthetase alpha subunit type 2 subfamily. Heterotetramer; dimer of two heterodimers formed by FARSA and FARSB. Requires Mg(2+) as cofactor.

The protein localises to the cytoplasm. It catalyses the reaction tRNA(Phe) + L-phenylalanine + ATP = L-phenylalanyl-tRNA(Phe) + AMP + diphosphate + H(+). The sequence is that of Phenylalanine--tRNA ligase alpha subunit (Farsa) from Rattus norvegicus (Rat).